The chain runs to 333 residues: Putative transporter MamV (333 aa).

5 consecutive transmembrane segments (helical) span residues 19-39 (AWLD…LGVL), 86-106 (FLSA…MLWY), 111-131 (LGSG…LISA), 170-190 (VLAG…LAAI), and 191-211 (LVSL…IHGL).

The protein belongs to the cation diffusion facilitator (CDF) transporter (TC 2.A.4) family.

It is found in the cell inner membrane. Expression of just the minimal mamAB gene cluster (amb0961 to amb0978), including this gene, is sufficient to form a minimal magnetosome chain with small magnetite particles. This chain is Putative transporter MamV, found in Paramagnetospirillum magneticum (strain ATCC 700264 / AMB-1) (Magnetospirillum magneticum).